The sequence spans 389 residues: 2-aminoethylphosphonate--pyruvate transaminase 1 (389 aa).

Lys196 carries the post-translational modification N6-(pyridoxal phosphate)lysine.

It belongs to the class-V pyridoxal-phosphate-dependent aminotransferase family. PhnW subfamily. In terms of assembly, homodimer. Pyridoxal 5'-phosphate serves as cofactor.

It catalyses the reaction (2-aminoethyl)phosphonate + pyruvate = phosphonoacetaldehyde + L-alanine. Functionally, involved in phosphonate degradation. The protein is 2-aminoethylphosphonate--pyruvate transaminase 1 of Paraburkholderia xenovorans (strain LB400).